A 396-amino-acid polypeptide reads, in one-letter code: Elongation factor Tu (396 aa).

One can recognise a tr-type G domain in the interval 10 to 206 (KPHVNVGTIG…TMDSYIPEPV (197 aa)). Residues 19–26 (GHVDHGKT) form a G1 region. 19–26 (GHVDHGKT) serves as a coordination point for GTP. Thr26 is a Mg(2+) binding site. Residues 60–64 (GITIS) are G2. The interval 81 to 84 (DCPG) is G3. Residues 81–85 (DCPGH) and 136–139 (NKAD) each bind GTP. The segment at 136-139 (NKAD) is G4. The G5 stretch occupies residues 174–176 (SAL).

Belongs to the TRAFAC class translation factor GTPase superfamily. Classic translation factor GTPase family. EF-Tu/EF-1A subfamily. In terms of assembly, monomer.

Its subcellular location is the cytoplasm. It carries out the reaction GTP + H2O = GDP + phosphate + H(+). Functionally, GTP hydrolase that promotes the GTP-dependent binding of aminoacyl-tRNA to the A-site of ribosomes during protein biosynthesis. In Legionella pneumophila (strain Lens), this protein is Elongation factor Tu.